We begin with the raw amino-acid sequence, 1264 residues long: Box A-binding factor (1264 aa).

Basic and acidic residues predominate over residues M1 to A11. Disordered stretches follow at residues M1–G25, T161–K200, L234–Q253, Q405–S463, N523–T585, and H599–Q627. Residues A16–G25 show a composition bias toward gly residues. Residues T161 to A171 are compositionally biased toward low complexity. The span at S189–S198 shows a compositional bias: polar residues. A compositionally biased stretch (basic residues) spans Q409–Q421. 3 stretches are compositionally biased toward low complexity: residues Q422–Q438, S447–S459, and N523–Q554. Residues Q555 to H564 are compositionally biased toward basic residues. Composition is skewed to low complexity over residues N565–T585 and H599–H614. The GATA-type zinc-finger motif lies at C803–C827. Disordered regions lie at residues T841–K867, D899–N1048, and E1181–E1202. Composition is skewed to low complexity over residues P909–S950 and Q985–S1007. Residues T1008–H1023 are compositionally biased toward polar residues. 2 stretches are compositionally biased toward low complexity: residues N1024–N1048 and Q1185–H1200. 2 positions are modified to phosphoserine: S1208 and S1210.

As to quaternary structure, interacts (via GATA-type Zn-finger domain) with Bfc; this interaction enhances srp binding to the promoter of crq/croquemort.

It localises to the nucleus. May function as a transcriptional activator protein and may play a key role in the organogenesis of the fat body. Binds a sequence element (5'-[TA]GATAA-3') found in the larval promoters of all known alcohol dehydrogenase (ADH) genes. Acts as a homeotic gene downstream of the terminal gap gene HKB to promote morphogenesis and differentiation of anterior and posterior midgut. Together with transcriptional cofactor Bfc directly binds the promoter of phagocytic receptor crq/croquemort to upregulate its expression and stimulate efferocytosis in response to apoptotic cells, including during embryogenesis. The polypeptide is Box A-binding factor (srp) (Drosophila melanogaster (Fruit fly)).